Consider the following 145-residue polypeptide: uncharacterized protein (145 aa).

The interval M1–F59 is disordered.

This is an uncharacterized protein from Caenorhabditis elegans.